The chain runs to 334 residues: Glyceraldehyde-3-phosphate dehydrogenase (334 aa).

NAD(+) contacts are provided by residues 12-13 (TI) and Gly111. Residue 140-142 (SCN) coordinates D-glyceraldehyde 3-phosphate. Residue Cys141 is the Nucleophile of the active site. Residue Arg167 participates in NAD(+) binding. 192–193 (HG) is a D-glyceraldehyde 3-phosphate binding site. Gln298 is an NAD(+) binding site.

It belongs to the glyceraldehyde-3-phosphate dehydrogenase family. Homotetramer.

Its subcellular location is the cytoplasm. It carries out the reaction D-glyceraldehyde 3-phosphate + phosphate + NADP(+) = (2R)-3-phospho-glyceroyl phosphate + NADPH + H(+). It catalyses the reaction D-glyceraldehyde 3-phosphate + phosphate + NAD(+) = (2R)-3-phospho-glyceroyl phosphate + NADH + H(+). Its pathway is carbohydrate degradation; glycolysis; pyruvate from D-glyceraldehyde 3-phosphate: step 1/5. The protein is Glyceraldehyde-3-phosphate dehydrogenase of Thermococcus onnurineus (strain NA1).